The sequence spans 154 residues: 6,7-dimethyl-8-ribityllumazine synthase (154 aa).

5-amino-6-(D-ribitylamino)uracil-binding positions include phenylalanine 22, 56-58 (AFE), and 80-82 (AVI). Position 85–86 (85–86 (ST)) interacts with (2S)-2-hydroxy-3-oxobutyl phosphate. Histidine 88 serves as the catalytic Proton donor. A 5-amino-6-(D-ribitylamino)uracil-binding site is contributed by phenylalanine 113. Arginine 127 provides a ligand contact to (2S)-2-hydroxy-3-oxobutyl phosphate.

This sequence belongs to the DMRL synthase family.

The catalysed reaction is (2S)-2-hydroxy-3-oxobutyl phosphate + 5-amino-6-(D-ribitylamino)uracil = 6,7-dimethyl-8-(1-D-ribityl)lumazine + phosphate + 2 H2O + H(+). The protein operates within cofactor biosynthesis; riboflavin biosynthesis; riboflavin from 2-hydroxy-3-oxobutyl phosphate and 5-amino-6-(D-ribitylamino)uracil: step 1/2. In terms of biological role, catalyzes the formation of 6,7-dimethyl-8-ribityllumazine by condensation of 5-amino-6-(D-ribitylamino)uracil with 3,4-dihydroxy-2-butanone 4-phosphate. This is the penultimate step in the biosynthesis of riboflavin. This chain is 6,7-dimethyl-8-ribityllumazine synthase, found in Clostridium beijerinckii (strain ATCC 51743 / NCIMB 8052) (Clostridium acetobutylicum).